A 136-amino-acid chain; its full sequence is uncharacterized protein (136 aa).

This is an uncharacterized protein from Bacillus anthracis.